A 399-amino-acid polypeptide reads, in one-letter code: Methylthioribose kinase (399 aa).

ATP is bound by residues Asn40, Lys57, and 111–113; that span reads EDL. Substrate is bound at residue Asp229. An ATP-binding site is contributed by 246–248; the sequence is DAE. Arg344 lines the substrate pocket.

Belongs to the methylthioribose kinase family. In terms of assembly, homodimer.

It carries out the reaction 5-(methylsulfanyl)-D-ribose + ATP = 5-(methylsulfanyl)-alpha-D-ribose 1-phosphate + ADP + H(+). It functions in the pathway amino-acid biosynthesis; L-methionine biosynthesis via salvage pathway; S-methyl-5-thio-alpha-D-ribose 1-phosphate from S-methyl-5'-thioadenosine (hydrolase route): step 2/2. Functionally, catalyzes the phosphorylation of methylthioribose into methylthioribose-1-phosphate. This is Methylthioribose kinase from Enterobacter sp. (strain 638).